Here is a 145-residue protein sequence, read N- to C-terminus: Ribosome-binding factor A (145 aa).

Residues 1–10 are compositionally biased toward basic residues; sequence MKRPSSHGRR. Disordered stretches follow at residues 1-21 and 124-145; these read MKRP…RQLR and DDPK…KDED.

The protein belongs to the RbfA family. As to quaternary structure, monomer. Binds 30S ribosomal subunits, but not 50S ribosomal subunits or 70S ribosomes.

It is found in the cytoplasm. Its function is as follows. One of several proteins that assist in the late maturation steps of the functional core of the 30S ribosomal subunit. Associates with free 30S ribosomal subunits (but not with 30S subunits that are part of 70S ribosomes or polysomes). Required for efficient processing of 16S rRNA. May interact with the 5'-terminal helix region of 16S rRNA. This chain is Ribosome-binding factor A, found in Phenylobacterium zucineum (strain HLK1).